Reading from the N-terminus, the 420-residue chain is Mannose-1-phosphate guanylyltransferase regulatory subunit alpha (420 aa).

Positions 2–251 (LKAVILIGGP…DGIWSQIKSA (250 aa)) are substrate-binding domain. Positions 85 and 247 each coordinate GDP-alpha-D-mannose. A hexapeptide repeat domain region spans residues 273 to 420 (LAKHTPGGPR…SRSFTNQIIL (148 aa)). The C-loop stretch occupies residues 356 to 384 (TPNDPNPNDPRARMDSESLFKDGKLLPAI).

The protein belongs to the transferase hexapeptide repeat family. As to quaternary structure, component of the GMPPA-GMPPB mannose-1-phosphate guanylyltransferase complex composed of 4 GMPPA subunits and 8 GMPPB subunits; the complex is organized into three layers, a central layer made up of 2 GMPPA dimers sandwiched between two layers each made up of 2 GMPPB dimers.

It is found in the cytoplasm. In terms of biological role, regulatory subunit of the GMPPA-GMPPB mannose-1-phosphate guanylyltransferase complex; reduces the catalytic activity of GMPPB when part of the complex. Mediates allosteric feedback inhibition of GMPPB catalytic activity upon binding GDP-alpha-D-mannose. Together with GMPPB regulates GDP-alpha-D-mannose levels. The chain is Mannose-1-phosphate guanylyltransferase regulatory subunit alpha (GMPPA) from Papio anubis (Olive baboon).